The following is a 274-amino-acid chain: Putative pyruvate, phosphate dikinase regulatory protein (274 aa).

ADP is bound at residue 150–157; that stretch reads GPSRTSKT.

The protein belongs to the pyruvate, phosphate/water dikinase regulatory protein family. PDRP subfamily.

The enzyme catalyses N(tele)-phospho-L-histidyl/L-threonyl-[pyruvate, phosphate dikinase] + ADP = N(tele)-phospho-L-histidyl/O-phospho-L-threonyl-[pyruvate, phosphate dikinase] + AMP + H(+). It catalyses the reaction N(tele)-phospho-L-histidyl/O-phospho-L-threonyl-[pyruvate, phosphate dikinase] + phosphate + H(+) = N(tele)-phospho-L-histidyl/L-threonyl-[pyruvate, phosphate dikinase] + diphosphate. Bifunctional serine/threonine kinase and phosphorylase involved in the regulation of the pyruvate, phosphate dikinase (PPDK) by catalyzing its phosphorylation/dephosphorylation. In Rickettsia peacockii (strain Rustic), this protein is Putative pyruvate, phosphate dikinase regulatory protein.